The primary structure comprises 352 residues: N-acetyl-gamma-glutamyl-phosphate reductase (352 aa).

Residue Cys-155 is part of the active site.

Belongs to the NAGSA dehydrogenase family. Type 1 subfamily.

It is found in the cytoplasm. It catalyses the reaction N-acetyl-L-glutamate 5-semialdehyde + phosphate + NADP(+) = N-acetyl-L-glutamyl 5-phosphate + NADPH + H(+). It functions in the pathway amino-acid biosynthesis; L-arginine biosynthesis; N(2)-acetyl-L-ornithine from L-glutamate: step 3/4. Functionally, catalyzes the NADPH-dependent reduction of N-acetyl-5-glutamyl phosphate to yield N-acetyl-L-glutamate 5-semialdehyde. The chain is N-acetyl-gamma-glutamyl-phosphate reductase from Cyanothece sp. (strain PCC 7425 / ATCC 29141).